We begin with the raw amino-acid sequence, 613 residues long: Dihydroxy-acid dehydratase (613 aa).

Residue Asp81 participates in Mg(2+) binding. Position 122 (Cys122) interacts with [2Fe-2S] cluster. Mg(2+) contacts are provided by Asp123 and Lys124. The residue at position 124 (Lys124) is an N6-carboxylysine. Residue Cys195 coordinates [2Fe-2S] cluster. Glu491 lines the Mg(2+) pocket. Residue Ser517 is the Proton acceptor of the active site.

This sequence belongs to the IlvD/Edd family. In terms of assembly, homodimer. [2Fe-2S] cluster is required as a cofactor. The cofactor is Mg(2+).

The catalysed reaction is (2R)-2,3-dihydroxy-3-methylbutanoate = 3-methyl-2-oxobutanoate + H2O. It catalyses the reaction (2R,3R)-2,3-dihydroxy-3-methylpentanoate = (S)-3-methyl-2-oxopentanoate + H2O. It participates in amino-acid biosynthesis; L-isoleucine biosynthesis; L-isoleucine from 2-oxobutanoate: step 3/4. It functions in the pathway amino-acid biosynthesis; L-valine biosynthesis; L-valine from pyruvate: step 3/4. Its function is as follows. Functions in the biosynthesis of branched-chain amino acids. Catalyzes the dehydration of (2R,3R)-2,3-dihydroxy-3-methylpentanoate (2,3-dihydroxy-3-methylvalerate) into 2-oxo-3-methylpentanoate (2-oxo-3-methylvalerate) and of (2R)-2,3-dihydroxy-3-methylbutanoate (2,3-dihydroxyisovalerate) into 2-oxo-3-methylbutanoate (2-oxoisovalerate), the penultimate precursor to L-isoleucine and L-valine, respectively. The chain is Dihydroxy-acid dehydratase from Buchnera aphidicola subsp. Melaphis rhois.